The primary structure comprises 269 residues: 3-methyl-2-oxobutanoate hydroxymethyltransferase (269 aa).

The Mg(2+) site is built by aspartate 43 and aspartate 82. Residues 43–44 (DS), aspartate 82, and lysine 110 contribute to the 3-methyl-2-oxobutanoate site. Glutamate 112 is a Mg(2+) binding site. Glutamate 179 (proton acceptor) is an active-site residue.

Belongs to the PanB family. As to quaternary structure, homodecamer; pentamer of dimers. Requires Mg(2+) as cofactor.

It localises to the cytoplasm. It carries out the reaction 3-methyl-2-oxobutanoate + (6R)-5,10-methylene-5,6,7,8-tetrahydrofolate + H2O = 2-dehydropantoate + (6S)-5,6,7,8-tetrahydrofolate. It functions in the pathway cofactor biosynthesis; (R)-pantothenate biosynthesis; (R)-pantoate from 3-methyl-2-oxobutanoate: step 1/2. Catalyzes the reversible reaction in which hydroxymethyl group from 5,10-methylenetetrahydrofolate is transferred onto alpha-ketoisovalerate to form ketopantoate. The sequence is that of 3-methyl-2-oxobutanoate hydroxymethyltransferase from Acinetobacter baylyi (strain ATCC 33305 / BD413 / ADP1).